Here is a 929-residue protein sequence, read N- to C-terminus: Protocadherin gamma-B3 (929 aa).

Residues 1–30 (MGNSSGWRGPAGQRRMLFLFLLSLLDQALS) form the signal peptide. Cadherin domains lie at 31–133 (EPIR…PPTF), 134–242 (SQNI…PPVF), 243–347 (TQDM…APEI), 348–452 (TLAS…VPVF), 453–562 (HQAS…APLV), and 570–675 (EGSA…QPDL). Topologically, residues 31–691 (EPIRYAIPEE…SDPQAELQFH (661 aa)) are extracellular. N136 carries an N-linked (GlcNAc...) asparagine glycan. N419 and N545 each carry an N-linked (GlcNAc...) asparagine glycan. A helical membrane pass occupies residues 692-712 (LVVALALISVLFLLAVILAIS). The Cytoplasmic segment spans residues 713–929 (LRLRCSSRPA…KKKSGKKEKK (217 aa)). Disordered regions lie at residues 791-838 (NDNP…WPNN) and 899-929 (ATLTNAAGKRDGKAPAGGNGNKKKSGKKEKK). The span at 919–929 (NKKKSGKKEKK) shows a compositional bias: basic residues.

The protein resides in the cell membrane. Functionally, potential calcium-dependent cell-adhesion protein. May be involved in the establishment and maintenance of specific neuronal connections in the brain. This Homo sapiens (Human) protein is Protocadherin gamma-B3 (PCDHGB3).